Reading from the N-terminus, the 298-residue chain is L-xylulose reductase (298 aa).

Residues Ile-19, Asp-68, and Asn-103 each coordinate NADP(+). Catalysis depends on proton donor residues Ser-161, Ser-162, and Tyr-175. NADP(+) is bound by residues Tyr-175, Lys-179, and Val-207. The active-site Lowers pKa of active site Tyr is the Lys-179.

Belongs to the short-chain dehydrogenases/reductases (SDR) family.

It catalyses the reaction xylitol + NADP(+) = L-xylulose + NADPH + H(+). It functions in the pathway carbohydrate degradation; L-arabinose degradation via L-arabinitol; D-xylulose 5-phosphate from L-arabinose (fungal route): step 3/5. L-xylulose reductase involved in the catabolism of L-arabinose through an oxidoreductive pathway. Catalyzes the NADPH-dependent reduction of L-xylulose. This is L-xylulose reductase from Aspergillus niger (strain ATCC 1015 / CBS 113.46 / FGSC A1144 / LSHB Ac4 / NCTC 3858a / NRRL 328 / USDA 3528.7).